A 336-amino-acid chain; its full sequence is Nicotinate-nucleotide--dimethylbenzimidazole phosphoribosyltransferase (336 aa).

The active-site Proton acceptor is the E304.

The protein belongs to the CobT family.

It catalyses the reaction 5,6-dimethylbenzimidazole + nicotinate beta-D-ribonucleotide = alpha-ribazole 5'-phosphate + nicotinate + H(+). The protein operates within nucleoside biosynthesis; alpha-ribazole biosynthesis; alpha-ribazole from 5,6-dimethylbenzimidazole: step 1/2. Its function is as follows. Catalyzes the synthesis of alpha-ribazole-5'-phosphate from nicotinate mononucleotide (NAMN) and 5,6-dimethylbenzimidazole (DMB). This chain is Nicotinate-nucleotide--dimethylbenzimidazole phosphoribosyltransferase, found in Ruegeria sp. (strain TM1040) (Silicibacter sp.).